The following is a 120-amino-acid chain: NAD(P)H-quinone oxidoreductase subunit 3, chloroplastic (120 aa).

The next 3 membrane-spanning stretches (helical) occupy residues 9–29 (IFWA…LISG), 64–84 (MFAL…PWAM), and 88–108 (VLGV…IVGS).

It belongs to the complex I subunit 3 family. NDH is composed of at least 16 different subunits, 5 of which are encoded in the nucleus.

Its subcellular location is the plastid. The protein localises to the chloroplast thylakoid membrane. The enzyme catalyses a plastoquinone + NADH + (n+1) H(+)(in) = a plastoquinol + NAD(+) + n H(+)(out). It carries out the reaction a plastoquinone + NADPH + (n+1) H(+)(in) = a plastoquinol + NADP(+) + n H(+)(out). In terms of biological role, NDH shuttles electrons from NAD(P)H:plastoquinone, via FMN and iron-sulfur (Fe-S) centers, to quinones in the photosynthetic chain and possibly in a chloroplast respiratory chain. The immediate electron acceptor for the enzyme in this species is believed to be plastoquinone. Couples the redox reaction to proton translocation, and thus conserves the redox energy in a proton gradient. The chain is NAD(P)H-quinone oxidoreductase subunit 3, chloroplastic from Phaseolus vulgaris (Kidney bean).